The primary structure comprises 148 residues: Multiprotein-bridging factor 1c (148 aa).

Residues 91–145 form the HTH cro/C1-type domain; it reads IQKARLEKKMSQADLAKQINERTQVVQEYENGKAVPNQAVLAKMEKVLGVKLRGK. A DNA-binding region (H-T-H motif) is located at residues 102 to 121; the sequence is QADLAKQINERTQVVQEYEN.

The protein belongs to the MBF1 family. In terms of assembly, binds to TPS5. Expressed in leaves, roots, stems, flowers, siliques and shoots. Not detected in seeds.

Its subcellular location is the nucleus. It is found in the nucleolus. The protein resides in the cytoplasm. Functionally, transcriptional coactivator that stimulates transcriptional activity by bridging regulatory proteins and TBP, thereby recruiting TBP to promoters occupied by DNA-binding regulators. Involved in the tolerance to heat and osmotic stress by partially activating the ethylene-response signal transduction pathway. This is Multiprotein-bridging factor 1c (MBF1C) from Arabidopsis thaliana (Mouse-ear cress).